Reading from the N-terminus, the 376-residue chain is Probable low-specificity L-threonine aldolase (376 aa).

The segment covering Met-1–Ser-21 has biased composition (polar residues). The interval Met-1–Ala-22 is disordered. N6-(pyridoxal phosphate)lysine is present on Lys-226.

The protein belongs to the threonine aldolase family. In terms of assembly, homotetramer. The cofactor is pyridoxal 5'-phosphate.

The enzyme catalyses L-threonine = acetaldehyde + glycine. It catalyses the reaction L-allo-threonine = acetaldehyde + glycine. Its pathway is amino-acid degradation; L-threonine degradation via aldolase pathway; acetaldehyde and glycine from L-threonine: step 1/1. This Schizosaccharomyces pombe (strain 972 / ATCC 24843) (Fission yeast) protein is Probable low-specificity L-threonine aldolase (gly1).